Reading from the N-terminus, the 169-residue chain is Anaerobic nitrite reductase NSHB2 (169 aa).

A Globin domain is found at 16–166 (SFSEEQEALV…LVAAIKQEMK (151 aa)). Positions 49 to 53 (EVAPS) match the Homodimerization motif. Heme b contacts are provided by serine 59, lysine 73, histidine 77, arginine 107, threonine 111, and histidine 112. The Homodimerization motif lies at 119 to 131 (DAHFEVTRFALLE).

It belongs to the plant globin family. As to quaternary structure, homodimer. Heme b is required as a cofactor. In terms of tissue distribution, expressed in leaves, but not in roots. Present in embryonic organs including embryos, coleoptiles and seminal roots.

It localises to the cytoplasm. It is found in the nucleus. The catalysed reaction is Fe(III)-heme b-[protein] + nitric oxide + H2O = Fe(II)-heme b-[protein] + nitrite + 2 H(+). In terms of biological role, phytoglobin that reduces nitrite to nitric oxide under anoxic conditions (e.g. during flooding or in waterlogged soil). May not function as an oxygen storage or transport protein. Has an unusually high affinity for O(2) through an hexacoordinate heme iron because of a very low dissociation constant. Promotes tolerance to low potassium K(+) conditions. The chain is Anaerobic nitrite reductase NSHB2 from Oryza sativa subsp. japonica (Rice).